The primary structure comprises 220 residues: Glycerol-3-phosphate acyltransferase (220 aa).

Transmembrane regions (helical) follow at residues 11 to 31 (INVI…GYAL), 70 to 90 (LLVL…SKLF), 96 to 116 (LQWM…FLNF), 127 to 147 (GSVV…WFFV), 153 to 173 (ISSL…FFVP), and 193 to 213 (MVLI…NLLA).

It belongs to the PlsY family. As to quaternary structure, probably interacts with PlsX.

The protein resides in the cell inner membrane. The catalysed reaction is an acyl phosphate + sn-glycerol 3-phosphate = a 1-acyl-sn-glycero-3-phosphate + phosphate. It participates in lipid metabolism; phospholipid metabolism. Functionally, catalyzes the transfer of an acyl group from acyl-phosphate (acyl-PO(4)) to glycerol-3-phosphate (G3P) to form lysophosphatidic acid (LPA). This enzyme utilizes acyl-phosphate as fatty acyl donor, but not acyl-CoA or acyl-ACP. This chain is Glycerol-3-phosphate acyltransferase, found in Helicobacter pylori (strain HPAG1).